A 62-amino-acid chain; its full sequence is YTLKCNKLVPLFYKTCPAGKNLCYKMFMVSNKTVPVKRGCIDVCPKNSALVKYVCCNTDRCN.

The first 2 residues, 1–2 (YT), serve as a signal peptide directing secretion. Intrachain disulfides connect C5/C23, C16/C40, C44/C55, and C56/C61.

The protein belongs to the three-finger toxin family. Short-chain subfamily. Type IA cytotoxin sub-subfamily. In terms of assembly, monomer in solution; Homodimer and oligomer in the presence of negatively charged lipids forming a pore with a size ranging between 20 and 30 Angstroms. As to expression, expressed by the venom gland.

The protein localises to the secreted. Its subcellular location is the target cell membrane. Its function is as follows. Shows cytolytic activity on many different cells by forming pore in lipid membranes. In vivo, increases heart rate or kills the animal by cardiac arrest. In addition, it binds to heparin with high affinity, interacts with Kv channel-interacting protein 1 (KCNIP1) in a calcium-independent manner, and binds to integrin alpha-V/beta-3 (ITGAV/ITGB3) with moderate affinity. The polypeptide is Cytotoxin 6 (Naja sputatrix (Malayan spitting cobra)).